The sequence spans 99 residues: Co-chaperonin GroES (99 aa).

Belongs to the GroES chaperonin family. As to quaternary structure, heptamer of 7 subunits arranged in a ring. Interacts with the chaperonin GroEL.

It is found in the cytoplasm. In terms of biological role, together with the chaperonin GroEL, plays an essential role in assisting protein folding. The GroEL-GroES system forms a nano-cage that allows encapsulation of the non-native substrate proteins and provides a physical environment optimized to promote and accelerate protein folding. GroES binds to the apical surface of the GroEL ring, thereby capping the opening of the GroEL channel. This Methylacidiphilum infernorum (isolate V4) (Methylokorus infernorum (strain V4)) protein is Co-chaperonin GroES.